The following is a 632-amino-acid chain: Cyclic GMP-AMP synthase-like receptor 2 (632 aa).

Residues aspartate 71, aspartate 73, and aspartate 181 each coordinate Mg(2+). Aspartate 295 lines the Mn(2+) pocket.

It belongs to the mab-21 family. It depends on Mg(2+) as a cofactor. Mn(2+) serves as cofactor.

Nucleotidyltransferase that catalyzes the formation of some cyclic nucleotide and plays a key role in innate immunity. Directly binds some unknown ligand, activating the nucleotidyltransferase activity, leading to synthesis of a second messenger that binds to and activates Sting, thereby triggering the immune response via activation of the NF-kappa-B transcription factor. The protein is Cyclic GMP-AMP synthase-like receptor 2 of Crassostrea virginica (Eastern oyster).